A 405-amino-acid chain; its full sequence is Plasma serine protease inhibitor (405 aa).

Residues 1 to 19 (MRFFPILCLVLFISHGVAS) form the signal peptide. Residues 20–24 (RRHSH) constitute a propeptide, removed in mature form. A glycan (N-linked (GlcNAc...) asparagine) is linked at N247.

This sequence belongs to the serpin family. In terms of assembly, forms protease inhibiting heterodimers in extracellular body fluids with serine proteases such as activated protein C/coagulation factor V/F5, acrosin/ACR, chymotrypsinogen B/CTRB1, prothrombin/F2, factor Xa/F10, factor XI/F11, kallikrein/KLKB1, tissue kallikrein, trypsin/PRSS1, prostate specific antigen/KLK3, tissue plasminogen activator/PLAT and urinary plasminogen activator/PLAU. Forms membrane-anchored serine proteases inhibiting heterodimers with TMPRSS7 and TMPRSS11E. Interacts with SEMG2. In terms of processing, N-glycosylated; glycans consist of a mixture of sialylated bi- (including sialyl-Lewis X epitopes), tri- and tetra-antennary complex-type chains; affects the maximal heparin- and thrombomodulin-enhanced rates of thrombin inhibition. O-glycosylated; further modified with 2 sialic acid residues. Proteolytically cleaved at the N-terminus; inhibits slightly the heparin- and thrombomodulin-enhanced rates of thrombin inhibition. Post-translationally, proteolytically cleaved. Inhibition of proteases is accompanied by formation of a stable enzyme-inhibitor complex and by degradation of the serpin to lower molecular weight derivatives. As to expression, not detected in blood plasma (at protein level). Expressed in testis, epididymis, seminal vesicles, prostate and ovaries.

It localises to the secreted. Its subcellular location is the extracellular space. Its activity is regulated as follows. Its inhibitory activity is greatly enhanced in the presence of glycosaminoglycans, heparin, thrombomodulin and phospholipids vesicles. In terms of biological role, heparin-dependent serine protease inhibitor acting in body fluids and secretions. Inactivates serine proteases by binding irreversibly to their serine activation site. Involved in the regulation of intravascular and extravascular proteolytic activities. Plays hemostatic roles in the blood plasma. Acts as a procoagulant and pro-inflammatory factor by inhibiting the anticoagulant activated protein C factor as well as the generation of activated protein C factor by the thrombin/thrombomodulin complex. Acts as an anticoagulant factor by inhibiting blood coagulation factors like prothrombin, factor XI, factor Xa, plasma kallikrein and fibrinolytic enzymes such as tissue- and urinary-type plasminogen activators. In seminal plasma, inactivates several serine proteases implicated in the reproductive system. Inhibits the serpin acrosin; indirectly protects component of the male genital tract from being degraded by excessive released acrosin. Inhibits tissue- and urinary-type plasminogen activator, prostate-specific antigen and kallikrein activities; has a control on the sperm motility and fertilization. Inhibits the activated protein C-catalyzed degradation of SEMG1 and SEMG2; regulates the degradation of semenogelin during the process of transfer of spermatozoa from the male reproductive tract into the female tract. In urine, inhibits urinary-type plasminogen activator and kallikrein activities. Inactivates membrane-anchored serine proteases activities such as MPRSS7 and TMPRSS11E. Inhibits urinary-type plasminogen activator-dependent tumor cell invasion and metastasis. May also play a non-inhibitory role in seminal plasma and urine as a hydrophobic hormone carrier by its binding to retinoic acid. This chain is Plasma serine protease inhibitor (Serpina5), found in Mus musculus (Mouse).